The sequence spans 500 residues: Perfringolysin O (500 aa).

The first 28 residues, 1–28, serve as a signal peptide directing secretion; sequence MIRFKKTKLIASIAMALCLFSQPVISFS. 4 beta stranded membrane passes run 189-202, 209-218, 287-296, and 304-316; these read KSQISSALNVNAKV, VDFNAVANNE, SKDVQAAFKA, and KNSQQYKDIYENS. A Conserved undecapeptide motif is present at residues 458–468; that stretch reads ECTGLAWEWWR. The short motif at 490–491 is the Cholesterol binding element; sequence TL.

The protein belongs to the cholesterol-dependent cytolysin family. As to quaternary structure, homooligomeric pore complex of 35 to 50 subunits; when inserted in the host membrane.

It is found in the secreted. The protein localises to the host cell membrane. In terms of biological role, a cholesterol-dependent toxin that causes cytolysis by forming pores in cholesterol containing host membranes. After binding to target membranes, the protein assembles into a pre-pore complex. A conformation change leads to insertion in the host membrane and formation of an oligomeric pore complex. Cholesterol is required for binding to host cell membranes, membrane insertion and pore formation; cholesterol binding is mediated by a Thr-Leu pair in the C-terminus. Can be reversibly inactivated by oxidation. This chain is Perfringolysin O (pfo), found in Clostridium perfringens (strain ATCC 13124 / DSM 756 / JCM 1290 / NCIMB 6125 / NCTC 8237 / Type A).